Here is a 226-residue protein sequence, read N- to C-terminus: Urease accessory protein UreG (226 aa).

The interval 1 to 26 (MPPHFLDGQPHGHTDRPRRVRQPGEP) is disordered. 33-40 (GPVGSGKT) is a GTP binding site.

The protein belongs to the SIMIBI class G3E GTPase family. UreG subfamily. As to quaternary structure, homodimer. UreD, UreF and UreG form a complex that acts as a GTP-hydrolysis-dependent molecular chaperone, activating the urease apoprotein by helping to assemble the nickel containing metallocenter of UreC. The UreE protein probably delivers the nickel.

The protein resides in the cytoplasm. Facilitates the functional incorporation of the urease nickel metallocenter. This process requires GTP hydrolysis, probably effectuated by UreG. The protein is Urease accessory protein UreG of Mycolicibacterium vanbaalenii (strain DSM 7251 / JCM 13017 / BCRC 16820 / KCTC 9966 / NRRL B-24157 / PYR-1) (Mycobacterium vanbaalenii).